We begin with the raw amino-acid sequence, 179 residues long: MSRIGKQPIPVPAGVDITIDGQNVLVKGPKGTLDLTVAEPIMLARNDEGAIVVTRPDNERRNRSLHGLSRTLVSNLVTGVTQGYTVSMEIFGVGYRAQLKGSNLEFALGYSHPVVIEAPEGITFAVQSPTKFTITGIDKQKVGQISANIRRLRRPDPYKGKGVRYEGEQIRRKVGKTGK.

Belongs to the universal ribosomal protein uL6 family. Part of the 50S ribosomal subunit.

This protein binds to the 23S rRNA, and is important in its secondary structure. It is located near the subunit interface in the base of the L7/L12 stalk, and near the tRNA binding site of the peptidyltransferase center. In Mycobacterium leprae (strain Br4923), this protein is Large ribosomal subunit protein uL6.